Reading from the N-terminus, the 63-residue chain is uncharacterized protein (63 aa).

2 consecutive transmembrane segments (helical) span residues 3-23 (VFLI…VYYI) and 42-62 (ALVC…TKLL).

The protein localises to the cell membrane. This is an uncharacterized protein from Bacillus subtilis (strain 168).